The following is a 464-amino-acid chain: Tyrosine aminotransferase (464 aa).

N6-(pyridoxal phosphate)lysine is present on Lys-284.

It belongs to the class-I pyridoxal-phosphate-dependent aminotransferase family. Homodimer. Pyridoxal 5'-phosphate is required as a cofactor. Expressed in the muscle. Expressed in the hypodermis and intestine.

The enzyme catalyses L-tyrosine + 2-oxoglutarate = 3-(4-hydroxyphenyl)pyruvate + L-glutamate. The catalysed reaction is 3-hydroxy-L-phenylalanine + 2-oxoglutarate = 3-(3-hydroxyphenyl)pyruvate + L-glutamate. It participates in amino-acid degradation; L-phenylalanine degradation; acetoacetate and fumarate from L-phenylalanine: step 2/6. Functionally, transaminase involved in tyrosine breakdown. Converts tyrosine to p-hydroxyphenylpyruvate. Has no transaminase activity towards phenylalanine. Plays protective role against oxidative stress, metabolizing meta-tyrosine and negatively regulating its accumulation. Plays a role in modulating the daf-2/insulin receptor-like transduction pathway through regulating tyrosine levels. Negatively regulates dauer formation. Plays a role in longevity. The polypeptide is Tyrosine aminotransferase (Caenorhabditis elegans).